The chain runs to 110 residues: Nucleoid-associated protein CbuK_1603 (110 aa).

This sequence belongs to the YbaB/EbfC family. Homodimer.

Its subcellular location is the cytoplasm. The protein resides in the nucleoid. Binds to DNA and alters its conformation. May be involved in regulation of gene expression, nucleoid organization and DNA protection. This chain is Nucleoid-associated protein CbuK_1603, found in Coxiella burnetii (strain CbuK_Q154) (Coxiella burnetii (strain Q154)).